We begin with the raw amino-acid sequence, 82 residues long: P2Y purinoceptor 2 (82 aa).

The helical transmembrane segment at 1–25 (LPLSYGVVCVLGLCLNVVALYIFLC) threads the bilayer. At 26–35 (RLKTWNASTT) the chain is on the cytoplasmic side. Residues 36 to 56 (YMFHLAVSDSLYAASLPLLVY) traverse the membrane as a helical segment. Residues 57–75 (YYAQGDHWPFSTVLCKLVR) lie on the Extracellular side of the membrane. Residues 76-82 (FLFYTNL) traverse the membrane as a helical segment.

The protein belongs to the G-protein coupled receptor 1 family. Expressed in brain, heart, stria vascularis and vestibular labyrinth.

The protein localises to the cell membrane. In terms of biological role, receptor for ATP and UTP coupled to G-proteins that activate a phosphatidylinositol-calcium second messenger system. Not activated by UDP. The chain is P2Y purinoceptor 2 (P2RY2) from Meriones unguiculatus (Mongolian jird).